The primary structure comprises 94 residues: Integration host factor subunit beta (94 aa).

The protein belongs to the bacterial histone-like protein family. In terms of assembly, heterodimer of an alpha and a beta chain.

This protein is one of the two subunits of integration host factor, a specific DNA-binding protein that functions in genetic recombination as well as in transcriptional and translational control. The protein is Integration host factor subunit beta of Serratia proteamaculans (strain 568).